Consider the following 129-residue polypeptide: Small ribosomal subunit protein uS9 (129 aa).

The interval 108–129 (RMVERKKYGKKKARKSFQFSKR) is disordered. A compositionally biased stretch (basic residues) spans 114–129 (KYGKKKARKSFQFSKR).

This sequence belongs to the universal ribosomal protein uS9 family.

This is Small ribosomal subunit protein uS9 from Chlorobaculum tepidum (strain ATCC 49652 / DSM 12025 / NBRC 103806 / TLS) (Chlorobium tepidum).